A 319-amino-acid chain; its full sequence is Quinolinate synthase (319 aa).

Iminosuccinate is bound by residues histidine 35 and serine 52. Cysteine 97 lines the [4Fe-4S] cluster pocket. Residues tyrosine 123 to asparagine 125 and serine 140 each bind iminosuccinate. Cysteine 183 lines the [4Fe-4S] cluster pocket. Iminosuccinate contacts are provided by residues histidine 209–glutamate 211 and threonine 226. A [4Fe-4S] cluster-binding site is contributed by cysteine 276.

It belongs to the quinolinate synthase family. Type 2 subfamily. The cofactor is [4Fe-4S] cluster.

The protein localises to the cytoplasm. The enzyme catalyses iminosuccinate + dihydroxyacetone phosphate = quinolinate + phosphate + 2 H2O + H(+). It functions in the pathway cofactor biosynthesis; NAD(+) biosynthesis; quinolinate from iminoaspartate: step 1/1. In terms of biological role, catalyzes the condensation of iminoaspartate with dihydroxyacetone phosphate to form quinolinate. This Microcystis aeruginosa (strain NIES-843 / IAM M-2473) protein is Quinolinate synthase.